We begin with the raw amino-acid sequence, 768 residues long: DNA ligase (768 aa).

Positions 1 to 11 (MSPSAPANSAP) are enriched in low complexity. The tract at residues 1–28 (MSPSAPANSAPDPDRNGVPDVGPASAAP) is disordered. Residues 62–66 (DAEYD), 111–112 (SI), and glutamate 148 contribute to the NAD(+) site. Lysine 150 acts as the N6-AMP-lysine intermediate in catalysis. Residues arginine 171, glutamate 238, lysine 361, and lysine 385 each coordinate NAD(+). Zn(2+) contacts are provided by cysteine 484, cysteine 487, cysteine 502, and cysteine 508. The BRCT domain maps to 670-759 (AAELPLAGKT…EADADADAEG (90 aa)).

Belongs to the NAD-dependent DNA ligase family. LigA subfamily. The cofactor is Mg(2+). Mn(2+) is required as a cofactor.

The enzyme catalyses NAD(+) + (deoxyribonucleotide)n-3'-hydroxyl + 5'-phospho-(deoxyribonucleotide)m = (deoxyribonucleotide)n+m + AMP + beta-nicotinamide D-nucleotide.. DNA ligase that catalyzes the formation of phosphodiester linkages between 5'-phosphoryl and 3'-hydroxyl groups in double-stranded DNA using NAD as a coenzyme and as the energy source for the reaction. It is essential for DNA replication and repair of damaged DNA. This chain is DNA ligase, found in Leptothrix cholodnii (strain ATCC 51168 / LMG 8142 / SP-6) (Leptothrix discophora (strain SP-6)).